Consider the following 164-residue polypeptide: Peptidyl-prolyl cis-trans isomerase A (164 aa).

Position 1 is an N-acetylmethionine (Met-1). Val-2 carries the post-translational modification N-acetylvaline; in Peptidyl-prolyl cis-trans isomerase A, N-terminally processed. The 157-residue stretch at 7–163 (FFDIAVDGEP…KKITIANCGQ (157 aa)) folds into the PPIase cyclophilin-type domain. Lys-28 carries the post-translational modification N6-acetyllysine; alternate. Residue Lys-28 forms a Glycyl lysine isopeptide (Lys-Gly) (interchain with G-Cter in SUMO2); alternate linkage. A Glycyl lysine isopeptide (Lys-Gly) (interchain with G-Cter in ubiquitin); alternate cross-link involves residue Lys-28. N6-acetyllysine is present on residues Lys-44 and Lys-76. Residue Ser-77 is modified to Phosphoserine. The residue at position 82 (Lys-82) is an N6-acetyllysine; alternate. Residue Lys-82 forms a Glycyl lysine isopeptide (Lys-Gly) (interchain with G-Cter in SUMO2); alternate linkage. Thr-93 carries the phosphothreonine modification. Asn-108 carries an N-linked (GlcNAc...) asparagine glycan. N6-acetyllysine is present on residues Lys-125 and Lys-133.

The protein belongs to the cyclophilin-type PPIase family. PPIase A subfamily. In terms of assembly, interacts with protein phosphatase PPP3CA/calcineurin A. Interacts with isoform 2 of BSG/CD147. Interacts with FOXO1; the interaction promotes FOXO1 dephosphorylation, nuclear accumulation and transcriptional activity. Interacts with integrin ITGA2B:ITGB3; the interaction is ROS and peptidyl-prolyl cis-trans isomerase (PPIase) activity-dependent and is increased in the presence of thrombin. Interacts with MAP3K5. Interacts with TARDBP; the interaction is dependent on the RNA-binding activity of TARDBP and the PPIase activity of PPIA/CYPA and the acetylation of PPIA/CYPA at Lys-125 favors the interaction. Interacts with HNRNPA1, HNRNPA2B1, HNRNPC, RBMX, HNRNPK and HNRNPM. Acetylation at Lys-125 markedly inhibits catalysis of cis to trans isomerization. PPIA acetylation also antagonizes the immunosuppressive effects of cyclosporine by inhibiting the sequential steps of cyclosporine binding and calcineurin inhibition. Acetylation at Lys-125 favors the interaction with TARDBP.

It is found in the cytoplasm. Its subcellular location is the secreted. The protein resides in the nucleus. The enzyme catalyses [protein]-peptidylproline (omega=180) = [protein]-peptidylproline (omega=0). With respect to regulation, binds cyclosporin A (CsA). CsA mediates some of its effects via an inhibitory action on PPIase. Catalyzes the cis-trans isomerization of proline imidic peptide bonds in oligopeptides. Exerts a strong chemotactic effect on leukocytes partly through activation of one of its membrane receptors BSG/CD147, initiating a signaling cascade that culminates in MAPK/ERK activation. Activates endothelial cells (ECs) in a proinflammatory manner by stimulating activation of NF-kappa-B and ERK, JNK and p38 MAP-kinases and by inducing expression of adhesion molecules including SELE and VCAM1. Induces apoptosis in ECs by promoting the FOXO1-dependent expression of CCL2 and BCL2L11 which are involved in EC chemotaxis and apoptosis. In response to oxidative stress, initiates proapoptotic and antiapoptotic signaling in ECs via activation of NF-kappa-B and AKT1 and up-regulation of antiapoptotic protein BCL2. Negatively regulates MAP3K5/ASK1 kinase activity, autophosphorylation and oxidative stress-induced apoptosis mediated by MAP3K5/ASK1. Necessary for the assembly of TARDBP in heterogeneous nuclear ribonucleoprotein (hnRNP) complexes and regulates TARDBP binding to RNA UG repeats and TARDBP-dependent expression of HDAC6, ATG7 and VCP which are involved in clearance of protein aggregates. Plays an important role in platelet activation and aggregation. Regulates calcium mobilization and integrin ITGA2B:ITGB3 bidirectional signaling via increased ROS production as well as by facilitating the interaction between integrin and the cell cytoskeleton. Binds heparan sulfate glycosaminoglycans. This chain is Peptidyl-prolyl cis-trans isomerase A (PPIA), found in Oryctolagus cuniculus (Rabbit).